The primary structure comprises 534 residues: MADPQATNGTGAACAERDASDVGDVSDVGDARDEGAGRVVAVRGAVVDVAFDGGALPALNEALTIPVDGAAPILAEVHAHLSDAAVRALALGPTGGLRRGAAVRATGGPIRVPVGDAVLGRLLSVTGAPGDDGAALAADVERRPIHRGAPPLAEQKSANALFATGIKVIDLLAPLAQGGKAAMFGGAGVGKTVLVMELIHAMVERYRGISVFAGIGERSREGHEMLLDMRGSGVLGRTVLVYGQMNEPPGARWRVPLTALAIAEYFRDERAQNVLLLMDNVFRFVQAGAEVSGLLGRLPSRVGYQPTLASEVAALQERIASVEGAAVTAIEAVYVPADDFTDPAVTAIAAHVDSMVVLSRAMAAEGMYPAIDPVASSSILLDPLVVGEAHVEVAIEVRRVIEHYRELQDVIALLGIDELGADDRRLVGRARRLQRFLTQPFAVTEAFTGQAGASVEIADTIAGCRAILRGDCDDWRESSLYMVGTLDDARRKEAAAREADARREAAAAASGAGPGTTSDPASGSAEPQGARHGR.

Residues 1–10 (MADPQATNGT) show a composition bias toward polar residues. The segment at 1–30 (MADPQATNGTGAACAERDASDVGDVSDVGD) is disordered. 185 to 192 (GGAGVGKT) lines the ATP pocket. Basic and acidic residues predominate over residues 494 to 505 (AAAREADARREA). The tract at residues 494 to 534 (AAAREADARREAAAAASGAGPGTTSDPASGSAEPQGARHGR) is disordered.

Belongs to the ATPase alpha/beta chains family. F-type ATPases have 2 components, CF(1) - the catalytic core - and CF(0) - the membrane proton channel. CF(1) has five subunits: alpha(3), beta(3), gamma(1), delta(1), epsilon(1). CF(0) has three main subunits: a(1), b(2) and c(9-12). The alpha and beta chains form an alternating ring which encloses part of the gamma chain. CF(1) is attached to CF(0) by a central stalk formed by the gamma and epsilon chains, while a peripheral stalk is formed by the delta and b chains.

It localises to the cell inner membrane. It catalyses the reaction ATP + H2O + 4 H(+)(in) = ADP + phosphate + 5 H(+)(out). In terms of biological role, produces ATP from ADP in the presence of a proton gradient across the membrane. The catalytic sites are hosted primarily by the beta subunits. The protein is ATP synthase subunit beta 2 of Burkholderia pseudomallei (strain 668).